Here is a 186-residue protein sequence, read N- to C-terminus: Putative 3-methyladenine DNA glycosylase (186 aa).

It belongs to the DNA glycosylase MPG family.

The protein is Putative 3-methyladenine DNA glycosylase of Borreliella afzelii (strain PKo) (Borrelia afzelii).